Here is a 310-residue protein sequence, read N- to C-terminus: Probable cell division protein WhiA (310 aa).

The H-T-H motif DNA-binding region spans 277–310; it reads SLKELAEQVPDGPISKSGVNHRLKKLHEIAENLR.

It belongs to the WhiA family.

Its function is as follows. Involved in cell division and chromosome segregation. The protein is Probable cell division protein WhiA of Lactobacillus delbrueckii subsp. bulgaricus (strain ATCC BAA-365 / Lb-18).